The following is a 382-amino-acid chain: 1-deoxy-D-xylulose 5-phosphate reductoisomerase (382 aa).

6 residues coordinate NADPH: Thr10, Gly11, Ser12, Ile13, Gly36, and Asn122. Lys123 lines the 1-deoxy-D-xylulose 5-phosphate pocket. An NADPH-binding site is contributed by Glu124. Asp148 is a binding site for Mn(2+). Ser149, Glu150, Ser174, and His197 together coordinate 1-deoxy-D-xylulose 5-phosphate. Glu150 contacts Mn(2+). Gly203 provides a ligand contact to NADPH. 1-deoxy-D-xylulose 5-phosphate contacts are provided by Ser210, Asn215, Lys216, and Glu219. Residue Glu219 coordinates Mn(2+).

Belongs to the DXR family. Mg(2+) is required as a cofactor. The cofactor is Mn(2+).

It catalyses the reaction 2-C-methyl-D-erythritol 4-phosphate + NADP(+) = 1-deoxy-D-xylulose 5-phosphate + NADPH + H(+). Its pathway is isoprenoid biosynthesis; isopentenyl diphosphate biosynthesis via DXP pathway; isopentenyl diphosphate from 1-deoxy-D-xylulose 5-phosphate: step 1/6. Functionally, catalyzes the NADPH-dependent rearrangement and reduction of 1-deoxy-D-xylulose-5-phosphate (DXP) to 2-C-methyl-D-erythritol 4-phosphate (MEP). The chain is 1-deoxy-D-xylulose 5-phosphate reductoisomerase from Pelodictyon phaeoclathratiforme (strain DSM 5477 / BU-1).